Reading from the N-terminus, the 282-residue chain is Heat stress transcription factor A-7b (282 aa).

2 stretches are compositionally biased toward low complexity: residues 1-11 (MDPSSSSRARS) and 120-134 (SSSSPPSLNYSQSQP). Disordered regions lie at residues 1 to 24 (MDPSSSSRARSMPPPVPMEGLQEA) and 117 to 139 (RRTSSSSPPSLNYSQSQPEAHDP). Residues 26 to 120 (PSPFLTKTFE…LLKSIKRRTS (95 aa)) mediate DNA binding. Residues 137-196 (HDPGVELPQLREERHVLMMEISTLRQEEQRARGYVQAMEQRINGAEKKQRHMMSFLRRAV) form a hydrophobic repeat HR-A/B region. The Nuclear localization signal signature appears at 208-212 (QKRDR). A Nuclear export signal motif is present at residues 232–240 (LSELEALAL). The short motif at 259 to 268 (DGFWEELLMN) is the AHA element.

The protein belongs to the HSF family. Class A subfamily. In terms of assembly, homotrimer. Post-translationally, exhibits temperature-dependent phosphorylation.

Its subcellular location is the cytoplasm. The protein localises to the nucleus. Its function is as follows. Transcriptional activator that specifically binds DNA sequence 5'-AGAAnnTTCT-3' known as heat shock promoter elements (HSE). This is Heat stress transcription factor A-7b (HSFA7B) from Arabidopsis thaliana (Mouse-ear cress).